Consider the following 280-residue polypeptide: Type II restriction enzyme MboI (280 aa).

The protein belongs to the DpnII type II restriction endonuclease family.

It catalyses the reaction Endonucleolytic cleavage of DNA to give specific double-stranded fragments with terminal 5'-phosphates.. Its function is as follows. A P subtype restriction enzyme that recognizes the double-stranded unmethylated sequence 5'-GATC-3' and cleaves before G-1. This Moraxella bovis protein is Type II restriction enzyme MboI (mboIR).